The following is an 83-amino-acid chain: Small ribosomal subunit protein bS20 (83 aa).

The segment covering 1–11 (MANHKSAAKRA) has biased composition (basic residues). The interval 1 to 44 (MANHKSAAKRAKQSEARRLRNKSTRSSMNTAVKKVRTAKEAGTD) is disordered.

This sequence belongs to the bacterial ribosomal protein bS20 family.

Functionally, binds directly to 16S ribosomal RNA. In Desulforapulum autotrophicum (strain ATCC 43914 / DSM 3382 / VKM B-1955 / HRM2) (Desulfobacterium autotrophicum), this protein is Small ribosomal subunit protein bS20.